A 1188-amino-acid polypeptide reads, in one-letter code: Integrin alpha-11 (1188 aa).

The N-terminal stretch at 1–22 (MDLPRGLVVAWALSLWPGFTDT) is a signal peptide. The Extracellular segment spans residues 23–1141 (FNMDTRKPRV…ISKQEDWQVP (1119 aa)). FG-GAP repeat units lie at residues 24–85 (NMDT…NCTK) and 91–151 (VTLS…FSKT). An intrachain disulfide couples cysteine 76 to cysteine 83. N-linked (GlcNAc...) asparagine glycans are attached at residues asparagine 82 and asparagine 95. 2 cysteine pairs are disulfide-bonded: cysteine 121–cysteine 139 and cysteine 129–cysteine 159. Residues 164-345 (DIVIVLDGSN…AALKDIVDAL (182 aa)) enclose the VWFA domain. N-linked (GlcNAc...) asparagine glycosylation is found at asparagine 291, asparagine 331, asparagine 358, asparagine 449, and asparagine 462. FG-GAP repeat units follow at residues 355–406 (TNKN…VIPL), 411–461 (LKEF…TMHN), 462–527 (NRSL…LFVY), 528–586 (NGTL…SILK), and 590–650 (QRIT…FEPS). Residues aspartate 488, aspartate 490, aspartate 492, and aspartate 496 each coordinate Ca(2+). N-linked (GlcNAc...) asparagine glycosylation is present at asparagine 528. Residues aspartate 551, asparagine 553, aspartate 555, aspartate 559, aspartate 613, asparagine 615, aspartate 617, and aspartate 621 each contribute to the Ca(2+) site. Asparagine 642 is a glycosylation site (N-linked (GlcNAc...) asparagine). 3 disulfides stabilise this stretch: cysteine 659-cysteine 668, cysteine 674-cysteine 729, and cysteine 781-cysteine 787. Asparagine 694 carries N-linked (GlcNAc...) asparagine glycosylation. Asparagine 857 carries N-linked (GlcNAc...) asparagine glycosylation. Cysteines 881 and 893 form a disulfide. 5 N-linked (GlcNAc...) asparagine glycosylation sites follow: asparagine 894, asparagine 973, asparagine 1031, asparagine 1039, and asparagine 1059. A helical transmembrane segment spans residues 1142–1164 (IWIIVGSTLGGLLLLALLVLALW). Residues 1165 to 1188 (KLGFFRSARRRREPGLDPTPKVLE) lie on the Cytoplasmic side of the membrane.

The protein belongs to the integrin alpha chain family. In terms of assembly, heterodimer of an alpha and a beta subunit. Alpha-11 associates with beta-1. Interacts with RAB21. In terms of tissue distribution, according to PubMed:10464311, highest levels of expression in uterus and heart, intermediate levels in skeletal muscle and intermediate to low levels in pancreas, kidney and placenta. According to PubMed:10486209, also found in brain, colon, lung, small intestine, stomach, testis, salivary glands, thyroid glands and prostate. Very low levels in peripheral blood lymphocytes, fetal brain and fetal liver.

Its subcellular location is the membrane. In terms of biological role, integrin alpha-11/beta-1 is a receptor for collagen. The polypeptide is Integrin alpha-11 (ITGA11) (Homo sapiens (Human)).